The sequence spans 104 residues: NADH-quinone oxidoreductase subunit K (104 aa).

3 consecutive transmembrane segments (helical) span residues 4–24, 31–51, and 64–84; these read VPLSVYLVLALILFCIGLYGA, VIVLICIELMLNAVNINLVAF, and IFALFTITVAAAEAAVGLAIL.

This sequence belongs to the complex I subunit 4L family. In terms of assembly, NDH-1 is composed of 14 different subunits. Subunits NuoA, H, J, K, L, M, N constitute the membrane sector of the complex.

It localises to the cell membrane. It catalyses the reaction a quinone + NADH + 5 H(+)(in) = a quinol + NAD(+) + 4 H(+)(out). In terms of biological role, NDH-1 shuttles electrons from NADH, via FMN and iron-sulfur (Fe-S) centers, to quinones in the respiratory chain. The immediate electron acceptor for the enzyme in this species is believed to be a menaquinone. Couples the redox reaction to proton translocation (for every two electrons transferred, four hydrogen ions are translocated across the cytoplasmic membrane), and thus conserves the redox energy in a proton gradient. The polypeptide is NADH-quinone oxidoreductase subunit K (Geobacillus sp. (strain WCH70)).